A 181-amino-acid chain; its full sequence is Regulator of G-protein signaling 5 (181 aa).

Residues 64–180 (SLDKLLQSNY…VRSEFYKELI (117 aa)) form the RGS domain.

The protein localises to the cytoplasm. Its subcellular location is the membrane. Its function is as follows. Inhibits signal transduction by increasing the GTPase activity of G protein alpha subunits thereby driving them into their inactive GDP-bound form. Binds to G(i)-alpha and G(o)-alpha, but not to G(s)-alpha. This chain is Regulator of G-protein signaling 5 (Rgs5), found in Rattus norvegicus (Rat).